The chain runs to 600 residues: Elongation factor 4 (600 aa).

The 183-residue stretch at 5–187 (SHIRNFSIVA…ALVNRLPCPE (183 aa)) folds into the tr-type G domain. Residues 17–22 (DHGKST) and 134–137 (NKID) each bind GTP.

Belongs to the TRAFAC class translation factor GTPase superfamily. Classic translation factor GTPase family. LepA subfamily.

The protein resides in the cell inner membrane. It carries out the reaction GTP + H2O = GDP + phosphate + H(+). Its function is as follows. Required for accurate and efficient protein synthesis under certain stress conditions. May act as a fidelity factor of the translation reaction, by catalyzing a one-codon backward translocation of tRNAs on improperly translocated ribosomes. Back-translocation proceeds from a post-translocation (POST) complex to a pre-translocation (PRE) complex, thus giving elongation factor G a second chance to translocate the tRNAs correctly. Binds to ribosomes in a GTP-dependent manner. The polypeptide is Elongation factor 4 (Paramagnetospirillum magneticum (strain ATCC 700264 / AMB-1) (Magnetospirillum magneticum)).